A 159-amino-acid polypeptide reads, in one-letter code: 17 kDa surface antigen (159 aa).

A signal peptide spans 1–19 (MKLLSKIMIIALATSMLQA). A lipid anchor (N-palmitoyl cysteine) is attached at C20. C20 carries S-diacylglycerol cysteine lipidation.

This sequence belongs to the rickettsiale 17 kDa surface antigen family.

It is found in the cell outer membrane. This Rickettsia japonica (strain ATCC VR-1363 / YH) protein is 17 kDa surface antigen (omp).